Consider the following 255-residue polypeptide: Small ribosomal subunit protein uS2 (255 aa).

It belongs to the universal ribosomal protein uS2 family.

This chain is Small ribosomal subunit protein uS2, found in Streptococcus pyogenes serotype M3 (strain ATCC BAA-595 / MGAS315).